The following is a 117-amino-acid chain: Immunity protein BC_0921 (117 aa).

As to quaternary structure, probably interacts with cognate toxin BC_0920 but not with other non-cognate toxins. The interaction inhibits the toxic activity of BC_0920.

It is found in the cytoplasm. Its function is as follows. Immunity component of an LXG toxin-immunity module. Neutralizes the RNase activity of cognate toxin BC_0920. Probably does not have immunity protein activity on other toxins with the LXG domain. This Bacillus cereus (strain ATCC 14579 / DSM 31 / CCUG 7414 / JCM 2152 / NBRC 15305 / NCIMB 9373 / NCTC 2599 / NRRL B-3711) protein is Immunity protein BC_0921.